We begin with the raw amino-acid sequence, 98 residues long: Small ribosomal subunit protein eS24 (98 aa).

It belongs to the eukaryotic ribosomal protein eS24 family.

In Thermococcus gammatolerans (strain DSM 15229 / JCM 11827 / EJ3), this protein is Small ribosomal subunit protein eS24.